A 1291-amino-acid chain; its full sequence is DNA-directed RNA polymerase subunit beta' (1291 aa).

The Zn(2+) site is built by Cys60, Cys62, Cys75, and Cys78. Asp535, Asp537, and Asp539 together coordinate Mg(2+). 4 residues coordinate Zn(2+): Cys874, Cys951, Cys958, and Cys961.

This sequence belongs to the RNA polymerase beta' chain family. In terms of assembly, the RNAP catalytic core consists of 2 alpha, 1 beta, 1 beta' and 1 omega subunit. When a sigma factor is associated with the core the holoenzyme is formed, which can initiate transcription. Mg(2+) is required as a cofactor. Requires Zn(2+) as cofactor.

It carries out the reaction RNA(n) + a ribonucleoside 5'-triphosphate = RNA(n+1) + diphosphate. Functionally, DNA-dependent RNA polymerase catalyzes the transcription of DNA into RNA using the four ribonucleoside triphosphates as substrates. The protein is DNA-directed RNA polymerase subunit beta' of Leifsonia xyli subsp. xyli (strain CTCB07).